Reading from the N-terminus, the 146-residue chain is Angiogenin (146 aa).

The first 24 residues, 1 to 24 (MVMGLHLLFLVFILGLGLTPPTLA), serve as a signal peptide directing secretion. Q25 carries the post-translational modification Pyrrolidone carboxylic acid. Catalysis depends on H37, which acts as the Proton acceptor. 3 cysteine pairs are disulfide-bonded: C50–C105, C63–C116, and C81–C131. A Nucleolar localization signal motif is present at residues 55 to 59 (RLRNM). TRNA contacts are provided by C105 and V127. Residue H138 is the Proton donor of the active site.

This sequence belongs to the pancreatic ribonuclease family. In terms of assembly, homodimer. Interacts with RNH1; inhibiting ANG ribonuclease activity. Interacts with PCNA.

It is found in the secreted. It localises to the nucleus. Its subcellular location is the nucleolus. The protein localises to the cytoplasm. The protein resides in the stress granule. With respect to regulation, has weak tRNA ribonuclease activity by itself due to partial autoinhibition by its C-terminus, which folds into a short alpha-helix that partially occludes the substrate-binding site. In absence of stress, the ribonuclease activity is inhibited by RNH1 in the cytoplasm. In response to stress, dissociates from RNH1 in the cytoplasm and associates with cytoplasmic ribosomes with vacant A-sites: ribosomes directly activate the tRNA ribonuclease activity of ANG by refolding the C-terminal alpha-helix. In response to stress, the angiogenic activity of ANG is inhibited by RNH1 in the nucleus. Secreted ribonuclease that can either promote or restrict cell proliferation of target cells, depending on the context. Endocytosed in target cells via its receptor PLXNB2 and translocates to the cytoplasm or nucleus. Under stress conditions, localizes to the cytoplasm and promotes the assembly of stress granules (SGs): specifically cleaves a subset of tRNAs within anticodon loops to produce tRNA-derived stress-induced fragments (tiRNAs), resulting in translation repression and inhibition of cell proliferation. tiRNas also prevent formation of apoptosome, thereby promoting cell survival. Preferentially cleaves RNAs between a pyrimidine and an adenosine residue, suggesting that it cleaves the anticodon loop of tRNA(Ala) (32-UUAGCAU-38) after positions 33 and 36. Cleaves a subset of tRNAs, including tRNA(Ala), tRNA(Glu), tRNA(Gly), tRNA(Lys), tRNA(Val), tRNA(His), tRNA(Asp) and tRNA(Sec). Under growth conditions and in differentiated cells, translocates to the nucleus and stimulates ribosomal RNA (rRNA) transcription, including that containing the initiation site sequences of 45S rRNA, thereby promoting cell growth and proliferation. Angiogenin induces vascularization of normal and malignant tissues via its ability to promote rRNA transcription. Involved in hematopoietic stem and progenitor cell (HSPC) growth and survival by promoting rRNA transcription in growth conditions and inhibiting translation in response to stress, respectively. Mediates the crosstalk between myeloid and intestinal epithelial cells to protect the intestinal epithelial barrier integrity: secreted by myeloid cells and promotes intestinal epithelial cells proliferation and survival. Also mediates osteoclast-endothelial cell crosstalk in growing bone: produced by osteoclasts and protects the neighboring vascular cells against senescence by promoting rRNA transcription. This is Angiogenin (ANG) from Saguinus oedipus (Cotton-top tamarin).